The primary structure comprises 204 residues: Small ribosomal subunit protein uS4 (204 aa).

The S4 RNA-binding domain maps to Ser-93–Glu-156.

Belongs to the universal ribosomal protein uS4 family. Part of the 30S ribosomal subunit. Contacts protein S5. The interaction surface between S4 and S5 is involved in control of translational fidelity.

Functionally, one of the primary rRNA binding proteins, it binds directly to 16S rRNA where it nucleates assembly of the body of the 30S subunit. Its function is as follows. With S5 and S12 plays an important role in translational accuracy. This chain is Small ribosomal subunit protein uS4, found in Wolbachia pipientis subsp. Culex pipiens (strain wPip).